The chain runs to 2025 residues: Pericentriolar material 1 protein (2025 aa).

Positions 1 to 91 (MATGGGPFEE…TFPHSRYMTQ (91 aa)) are disordered. The residue at position 2 (A2) is an N-acetylalanine. The interval 2 to 1458 (ATGGGPFEEV…TWVASNSELT (1457 aa)) is mediates interaction with DZIP1. Phosphoserine occurs at positions 65, 68, 69, 93, 110, 116, 119, and 159. A disordered region spans residues 111–140 (DLDQRSIGSDSQGRATAANNKRQLSENRKP). Residues 116–132 (SIGSDSQGRATAANNKR) are compositionally biased toward polar residues. Residues 218–301 (KASSMREDLV…QLRALQGRQA (84 aa)) adopt a coiled-coil conformation. Residues 354–390 (RDSQPPAVPDNRRQAESLSLTREISQSRNPSVSEHLP) are disordered. Residues 369-385 (ESLSLTREISQSRNPSV) are compositionally biased toward polar residues. Residue S370 is modified to Phosphoserine. Phosphoserine; by PLK4 is present on S372. The residue at position 384 (S384) is a Phosphoserine. The residue at position 399 (K399) is an N6-acetyllysine. Coiled coils occupy residues 399–426 (KMRVLQEKKQKMDKLLGELHNLRDQHLN) and 492–518 (AEKLQKLNEVQKRLNELRELVHYYEQT). 2 disordered regions span residues 528-553 (ENTKDEETEESEYDSEHENSEPVTNI) and 565-586 (VNTNSNTQCGSNNRDGRPVNSN). Acidic residues predominate over residues 531–540 (KDEETEESEY). At S593 the chain carries Phosphoserine. Residues 620 to 654 (AHGEDEEEEVEEEGVSGASLSSRRSSLVDEAPEDE) form a disordered region. Positions 623-633 (EDEEEEVEEEG) are enriched in acidic residues. The span at 634 to 644 (VSGASLSSRRS) shows a compositional bias: low complexity. Position 644 is a phosphoserine (S644). Coiled-coil stretches lie at residues 652–772 (EDEE…PDLQ) and 822–856 (SDMRRHEMLREELRQRRKQLEALMAEHQRRQGLAE). Residue T857 is modified to Phosphothreonine. S859, S864, S867, and S870 each carry phosphoserine. Disordered regions lie at residues 866–885 (RSDGSENLCTPQQSRTEKTM) and 913–940 (TDEEEEEEQDASSNDNFPIYPPSMNQNS). Residues 870-879 (SENLCTPQQS) show a composition bias toward polar residues. At T875 the chain carries Phosphothreonine. A phosphoserine mark is found at S957, S974, S985, and S988. 2 coiled-coil regions span residues 985-1017 (SELSYIEEKEQWQEQINQLKKQLDFSVNICQTL) and 1061-1086 (QLTWQQNNVQRLKQMLTELMRQQNQH). Disordered regions lie at residues 1081–1105 (RQQNQHPEKPRSKERGSSASHPSSP) and 1149–1213 (FSQN…YDQE). Over residues 1086–1096 (HPEKPRSKERG) the composition is skewed to basic and acidic residues. A compositionally biased stretch (polar residues) spans 1149–1169 (FSQNVSTPTEQQQPLAQNPSG). Phosphoserine is present on residues S1182 and S1185. Positions 1189–1198 (EKQRNQKQPE) are enriched in basic and acidic residues. Phosphoserine is present on residues S1228, S1254, S1257, S1259, and S1260. The disordered stretch occupies residues 1230-1310 (EKATNSNRKN…STQLKSRVKN (81 aa)). Over residues 1268-1285 (TTVTKTFKTRKASAQASL) the composition is skewed to polar residues. S1315 and S1317 each carry phosphoserine. A disordered region spans residues 1319–1338 (SSTCEPCKNRNRHSAQTEEP). Position 1466 is a phosphothreonine (T1466). 7 positions are modified to phosphoserine: S1571, S1695, S1729, S1766, S1769, S1777, and S1783. The interval 1720-1943 (KRILEGDHGS…AGSPDTESPV (224 aa)) is disordered. Residues 1756-1768 (YDAKGPKNVRSDV) are compositionally biased toward basic and acidic residues. Residues 1784 to 1798 (INLSKAESQALTNYG) show a composition bias toward polar residues. Positions 1800 to 1816 (GEDENEDEEMEDFEESP) are enriched in acidic residues. 4 stretches are compositionally biased toward polar residues: residues 1818 to 1828 (DIQTSLQANTE), 1849 to 1858 (ESTNVPSDQE), 1879 to 1901 (ENEQQLNSATHKDSLTTTDSSKQ), and 1925 to 1934 (AQETPESSLA). S1959 and S1978 each carry phosphoserine.

Belongs to the PCM1 family. As to quaternary structure, self-associates. Interacts with BBS4, BBS8, CETN3, HAP1, NDE1, NDEL1, MAP1LC3B, GABARAPAL2, and GABARAP. Interacts with CEP131; the interaction increases in response to ultraviolet light (UV) radiation. Associates with microtubule; association to microtubule is reduced in response to cellular stress, such as ultraviolet light (UV) radiation or heat shock, in a process that requires p38 MAP kinase signaling. Interacts with C2CD3. Interacts with CFAP263. Interacts with SSX2IP. Interacts with CCDC13. Interacts with CEP290. Interacts with PARD6A. Interacts with KIAA0753/OFIP, CEP20/FOR20 and OFD1; the interaction with CEP20/FOR20 and OFD1 may be mediated by KIAA0753/OFIP. Interacts with CCDC66. Interacts with CCDC61. Interacts with DZIP1; localizes DZIP1 and the associated BBSome to centriolar satellite. Interacts with CSTPP1, TTLL1, TPGS1 and LRRC49. Interacts with CFAP53. In terms of processing, ubiquitinated. Undergoes monoubiquitination catalyzed by the E3 ubiquitin-protein ligase MIB1 in proliferating cells, preventing cilia formation. Monoubiquitination by MIB1 is inhibited in response to cellular stress, such as ultraviolet light (UV) radiation or heat shock, resulting in cilia formation initiation. Post-translationally, phosphorylated on multiple serine and threonine residues by DYRK3 during the G2-to-M transition, after the nuclear-envelope breakdown. Phosphorylation by DYRK3 promotes disassembly of pericentriolar material. Phosphorylation at Ser-372 mediated by PLK4 is required to maintain the integrity of centriolar satellites. In terms of tissue distribution, expressed in the hippocampus and dentate gyrus, the columnar epithelial cells of bronchioles, the olfactory epithelium, the pericardium and the inner segment of the retina.

It is found in the cytoplasm. The protein localises to the cytoskeleton. Its subcellular location is the microtubule organizing center. It localises to the centrosome. The protein resides in the cytoplasmic granule. It is found in the centriolar satellite. The protein localises to the cilium basal body. Required for centrosome assembly and function. Essential for the correct localization of several centrosomal proteins including CEP250, CETN3, PCNT and NEK2. Required to anchor microtubules to the centrosome. Also involved in cilium biogenesis by recruiting the BBSome, a ciliary protein complex involved in cilium biogenesis, to the centriolar satellites. Recruits the tubulin polyglutamylase complex (TPGC) to centriolar satellites. This chain is Pericentriolar material 1 protein, found in Mus musculus (Mouse).